The chain runs to 425 residues: Aromatic prenyl transferase PC-22 (425 aa).

Residues 83-84 and Glu92 each bind L-tryptophan; that span reads GI. Substrate is bound by residues Arg107, Lys198, Tyr200, Arg265, Lys267, Tyr269, Tyr345, Tyr410, and Tyr414.

It belongs to the tryptophan dimethylallyltransferase family. As to quaternary structure, homodimer.

Its pathway is secondary metabolite biosynthesis. In terms of biological role, aromatic prenyl transferase; part of the gene cluster that mediates the biosynthesis of the indole diterpenes penitrems. The geranylgeranyl diphosphate (GGPP) synthase penG catalyzes the first step in penitrem biosynthesis via conversion of farnesyl pyrophosphate and isopentyl pyrophosphate into geranylgeranyl pyrophosphate (GGPP). Condensation of indole-3-glycerol phosphate with GGPP by the prenyl transferase penC then forms 3-geranylgeranylindole (3-GGI). Epoxidation by the FAD-dependent monooxygenase penM leads to a epoxidized-GGI that is substrate of the terpene cyclase penB for cyclization to yield paspaline. Paspaline is subsequently converted to 13-desoxypaxilline by the cytochrome P450 monooxygenase penP, the latter being then converted to paxilline by the cytochrome P450 monooxygenase penQ. Paxilline is converted to beta-paxitriol via C-10 ketoreduction by the short-chain dehydrogenase PC-15 which can be monoprenylated at the C-20 by the indole diterpene prenyltransferase penD. A two-step elimination (acetylation and elimination) process performed by the O-acetyltransferase PC-16 and the P.simplicissimum ptmI-ortholog not yet identified in P.crustosum, leads to the production of the prenylated form of penijanthine. The FAD-linked oxidoreductase ptmO then converts the prenylated form of penijanthine into PC-M5 which is in turn transformed into PC-M4 by the aromatic dimethylallyltransferase PC-22. A series of oxidation steps involving 4 cytochrome P450 monooxygenases (PC-21, PC-05, PC-23, PC-20) and a FAD-dependent monooxygenase (PC-14) are required for the transformation of PC-M4 to penitrems A and E. Synthesis of these final products is proposed to proceed via penitrems D and C (PC-21, PC-05, PC-14) and penitrems B and F (PC-21, PC-05, PC-14, PC-23). The protein is Aromatic prenyl transferase PC-22 of Penicillium crustosum (Blue mold fungus).